Here is a 31-residue protein sequence, read N- to C-terminus: Cytochrome b6-f complex subunit 6 (31 aa).

Residues 3–23 (ALIGYILLMTLMFSLAAGLYF) traverse the membrane as a helical segment.

This sequence belongs to the PetL family. The 4 large subunits of the cytochrome b6-f complex are cytochrome b6, subunit IV (17 kDa polypeptide, PetD), cytochrome f and the Rieske protein, while the 4 small subunits are PetG, PetL, PetM and PetN. The complex functions as a dimer.

The protein resides in the plastid. The protein localises to the chloroplast thylakoid membrane. Its function is as follows. Component of the cytochrome b6-f complex, which mediates electron transfer between photosystem II (PSII) and photosystem I (PSI), cyclic electron flow around PSI, and state transitions. PetL is important for photoautotrophic growth as well as for electron transfer efficiency and stability of the cytochrome b6-f complex. This is Cytochrome b6-f complex subunit 6 from Emiliania huxleyi (Coccolithophore).